Consider the following 203-residue polypeptide: MIGRLRGIIIEKQPPLVLIEVGGVGYEVHMPMTCFYELPEAGQEAIVFTHFVVREDAQLLYGFNNKQERTLFKELIKTNGVGPKLALAILSGMSAQQFVNAVEREEVGALVKLPGIGKKTAERLIVEMKDRFKGLHGDLFTPAADLVLTSPASPATDDAEQEAVAALVALGYKPQEASRMVSKIARPDASSETLIREALHAAL.

The tract at residues 1–64 (MIGRLRGIII…EDAQLLYGFN (64 aa)) is domain I. The domain II stretch occupies residues 65–142 (NKQERTLFKE…KGLHGDLFTP (78 aa)). Positions 143 to 154 (AADLVLTSPASP) are flexible linker. The interval 155–203 (ATDDAEQEAVAALVALGYKPQEASRMVSKIARPDASSETLIREALHAAL) is domain III.

It belongs to the RuvA family. Homotetramer. Forms an RuvA(8)-RuvB(12)-Holliday junction (HJ) complex. HJ DNA is sandwiched between 2 RuvA tetramers; dsDNA enters through RuvA and exits via RuvB. An RuvB hexamer assembles on each DNA strand where it exits the tetramer. Each RuvB hexamer is contacted by two RuvA subunits (via domain III) on 2 adjacent RuvB subunits; this complex drives branch migration. In the full resolvosome a probable DNA-RuvA(4)-RuvB(12)-RuvC(2) complex forms which resolves the HJ.

The protein resides in the cytoplasm. Its function is as follows. The RuvA-RuvB-RuvC complex processes Holliday junction (HJ) DNA during genetic recombination and DNA repair, while the RuvA-RuvB complex plays an important role in the rescue of blocked DNA replication forks via replication fork reversal (RFR). RuvA specifically binds to HJ cruciform DNA, conferring on it an open structure. The RuvB hexamer acts as an ATP-dependent pump, pulling dsDNA into and through the RuvAB complex. HJ branch migration allows RuvC to scan DNA until it finds its consensus sequence, where it cleaves and resolves the cruciform DNA. The chain is Holliday junction branch migration complex subunit RuvA from Escherichia fergusonii (strain ATCC 35469 / DSM 13698 / CCUG 18766 / IAM 14443 / JCM 21226 / LMG 7866 / NBRC 102419 / NCTC 12128 / CDC 0568-73).